The sequence spans 85 residues: Cell division topological specificity factor (85 aa).

This sequence belongs to the MinE family.

Its function is as follows. Prevents the cell division inhibition by proteins MinC and MinD at internal division sites while permitting inhibition at polar sites. This ensures cell division at the proper site by restricting the formation of a division septum at the midpoint of the long axis of the cell. The polypeptide is Cell division topological specificity factor (Shewanella oneidensis (strain ATCC 700550 / JCM 31522 / CIP 106686 / LMG 19005 / NCIMB 14063 / MR-1)).